The sequence spans 124 residues: Putative iron-sulfur cluster insertion protein ErpA (124 aa).

Iron-sulfur cluster-binding residues include cysteine 52, cysteine 116, and cysteine 118.

The protein belongs to the HesB/IscA family. Homodimer. It depends on iron-sulfur cluster as a cofactor.

Functionally, required for insertion of 4Fe-4S clusters. This chain is Putative iron-sulfur cluster insertion protein ErpA, found in Delftia acidovorans (strain DSM 14801 / SPH-1).